The primary structure comprises 153 residues: Aspartate carbamoyltransferase regulatory chain (153 aa).

Residues cysteine 109, cysteine 114, cysteine 138, and cysteine 141 each contribute to the Zn(2+) site.

Belongs to the PyrI family. Contains catalytic and regulatory chains. The cofactor is Zn(2+).

In terms of biological role, involved in allosteric regulation of aspartate carbamoyltransferase. The polypeptide is Aspartate carbamoyltransferase regulatory chain (Vibrio vulnificus (strain YJ016)).